Here is a 1051-residue protein sequence, read N- to C-terminus: Putative helicase/primase complex protein (1051 aa).

This sequence belongs to the asfivirus F1055L family.

Its function is as follows. May be involved in DNA replication. The sequence is that of Putative helicase/primase complex protein from Ornithodoros (relapsing fever ticks).